We begin with the raw amino-acid sequence, 218 residues long: Glutathione S-transferase Mu 4 (218 aa).

Residues 1-88 (MPMTLGYWDI…YIARKHNLCG (88 aa)) form the GST N-terminal domain. Glutathione is bound by residues 7 to 8 (YW), 46 to 50 (WLSEK), 59 to 60 (NL), and 72 to 73 (QS). One can recognise a GST C-terminal domain in the interval 90 to 208 (TEEEKIRVDI…KTSRFLRTPL (119 aa)). Tyr-116 provides a ligand contact to substrate.

It belongs to the GST superfamily. Mu family. In terms of assembly, homodimer.

The protein resides in the cytoplasm. It catalyses the reaction RX + glutathione = an S-substituted glutathione + a halide anion + H(+). The enzyme catalyses 1-chloro-2,4-dinitrobenzene + glutathione = 2,4-dinitrophenyl-S-glutathione + chloride + H(+). The catalysed reaction is (13S,14S)-epoxy-(4Z,7Z,9E,11E,16Z,19Z)-docosahexaenoate + glutathione = (13R)-S-glutathionyl-(14S)-hydroxy-(4Z,7Z,9E,11E,16Z,19Z)-docosahexaenoate. It carries out the reaction leukotriene C4 = leukotriene A4 + glutathione. Its function is as follows. Conjugation of reduced glutathione to a wide number of exogenous and endogenous hydrophobic electrophiles. Catalyzes the conjugation of leukotriene A4 with reduced glutathione (GSH) to form leukotriene C4. Can also catalyze the transfer of a glutathionyl group from glutathione (GSH) to 13(S),14(S)-epoxy-docosahexaenoic acid to form maresin conjugate in tissue regeneration 1 (MCTR1), a bioactive lipid mediator that possess potent anti-inflammatory and proresolving actions. This chain is Glutathione S-transferase Mu 4 (Gstm4), found in Rattus norvegicus (Rat).